Here is a 213-residue protein sequence, read N- to C-terminus: Uridine kinase (213 aa).

Residue 15 to 22 (GASASGKS) participates in ATP binding.

This sequence belongs to the uridine kinase family.

The protein localises to the cytoplasm. The catalysed reaction is uridine + ATP = UMP + ADP + H(+). It catalyses the reaction cytidine + ATP = CMP + ADP + H(+). It participates in pyrimidine metabolism; CTP biosynthesis via salvage pathway; CTP from cytidine: step 1/3. It functions in the pathway pyrimidine metabolism; UMP biosynthesis via salvage pathway; UMP from uridine: step 1/1. The sequence is that of Uridine kinase from Sodalis glossinidius (strain morsitans).